Reading from the N-terminus, the 176-residue chain is Ribosome maturation factor RimM (176 aa).

Residues 97 to 176 (GDEFYWRELV…TIQVDWDPSF (80 aa)) enclose the PRC barrel domain.

Belongs to the RimM family. As to quaternary structure, binds ribosomal protein uS19.

It is found in the cytoplasm. Its function is as follows. An accessory protein needed during the final step in the assembly of 30S ribosomal subunit, possibly for assembly of the head region. Essential for efficient processing of 16S rRNA. May be needed both before and after RbfA during the maturation of 16S rRNA. It has affinity for free ribosomal 30S subunits but not for 70S ribosomes. This chain is Ribosome maturation factor RimM, found in Pseudoalteromonas atlantica (strain T6c / ATCC BAA-1087).